The following is a 70-amino-acid chain: Small ribosomal subunit protein bS21 (70 aa).

The segment at 39–70 (EKPTTERKRKKAAAVSRTRKRLRSQMLPKKLY) is disordered. The span at 45–61 (RKRKKAAAVSRTRKRLR) shows a compositional bias: basic residues.

The protein belongs to the bacterial ribosomal protein bS21 family.

The polypeptide is Small ribosomal subunit protein bS21 (Ralstonia nicotianae (strain ATCC BAA-1114 / GMI1000) (Ralstonia solanacearum)).